Here is a 200-residue protein sequence, read N- to C-terminus: MLAFCRSSLKSKKYFIILLALAAIAGLGTHAAWSSNGLPRIDNKTLGRLAQQHPVVVLFRHAEHCDRSTNQCLSDKTGITVKGTQDARELGNAFSADIPDFDLYSSNTVRTIQSATWFSAGKKLTVDKRLLQCGNEIYSAIKDLQSKAPDKNIVIFTHNHCLTYIAKDKRDATFKPDYLDGLVMHVEKGKVYLDGEFVNH.

Residues 1-25 (MLAFCRSSLKSKKYFIILLALAAIA) form the signal peptide.

The protein belongs to the phosphoglycerate mutase family. Ais subfamily.

It localises to the periplasm. It functions in the pathway bacterial outer membrane biogenesis; lipopolysaccharide metabolism. Catalyzes the dephosphorylation of heptose(II) of the outer membrane lipopolysaccharide core. This chain is Lipopolysaccharide core heptose(II)-phosphate phosphatase, found in Escherichia coli O157:H7 (strain EC4115 / EHEC).